The sequence spans 200 residues: Protein GrpE (200 aa).

The segment covering 1–25 (MMSKQNKKDWKKFKDEHKEEHKVEN) has biased composition (basic and acidic residues). The disordered stretch occupies residues 1-52 (MMSKQNKKDWKKFKDEHKEEHKVENEILEEETDEESQHQEPALGHPSYTALE).

This sequence belongs to the GrpE family. In terms of assembly, homodimer.

Its subcellular location is the cytoplasm. Its function is as follows. Participates actively in the response to hyperosmotic and heat shock by preventing the aggregation of stress-denatured proteins, in association with DnaK and GrpE. It is the nucleotide exchange factor for DnaK and may function as a thermosensor. Unfolded proteins bind initially to DnaJ; upon interaction with the DnaJ-bound protein, DnaK hydrolyzes its bound ATP, resulting in the formation of a stable complex. GrpE releases ADP from DnaK; ATP binding to DnaK triggers the release of the substrate protein, thus completing the reaction cycle. Several rounds of ATP-dependent interactions between DnaJ, DnaK and GrpE are required for fully efficient folding. The polypeptide is Protein GrpE (Legionella pneumophila subsp. pneumophila (strain Philadelphia 1 / ATCC 33152 / DSM 7513)).